A 192-amino-acid chain; its full sequence is Ribosomal RNA large subunit methyltransferase E (192 aa).

S-adenosyl-L-methionine contacts are provided by glycine 46, tryptophan 48, aspartate 63, aspartate 79, and aspartate 102. The Proton acceptor role is filled by lysine 142.

This sequence belongs to the class I-like SAM-binding methyltransferase superfamily. RNA methyltransferase RlmE family.

It is found in the cytoplasm. It catalyses the reaction uridine(2552) in 23S rRNA + S-adenosyl-L-methionine = 2'-O-methyluridine(2552) in 23S rRNA + S-adenosyl-L-homocysteine + H(+). In terms of biological role, specifically methylates the uridine in position 2552 of 23S rRNA at the 2'-O position of the ribose in the fully assembled 50S ribosomal subunit. The polypeptide is Ribosomal RNA large subunit methyltransferase E (Wolbachia pipientis wMel).